The following is a 189-amino-acid chain: Elongation factor P (189 aa).

This sequence belongs to the elongation factor P family.

It is found in the cytoplasm. Its pathway is protein biosynthesis; polypeptide chain elongation. Involved in peptide bond synthesis. Stimulates efficient translation and peptide-bond synthesis on native or reconstituted 70S ribosomes in vitro. Probably functions indirectly by altering the affinity of the ribosome for aminoacyl-tRNA, thus increasing their reactivity as acceptors for peptidyl transferase. This chain is Elongation factor P, found in Pseudomonas putida (strain GB-1).